We begin with the raw amino-acid sequence, 197 residues long: MDDLSRFNQVCKKLGGRNLYLVGMMGSGKSRTGPVLAKKLSYGFVDVDDVIEKVTNQSISEIFDQEGEIGFREIETQILQEIGQRHSLVVATGGGIVTRPENWGILHQGVVIWIDLDREIALSRLRSDETPRPLLQKNLDDNFDCLFKERLPIYLESDVHLSVREESPDDVAIGICTNLQLLLLKDEGLDGRQTIEE.

Residue 26–31 (GSGKSR) coordinates ATP. Ser30 is a Mg(2+) binding site. Substrate is bound by residues Asp48, Arg72, and Gly94. Arg132 is an ATP binding site. Arg150 is a binding site for substrate.

It belongs to the shikimate kinase family. As to quaternary structure, monomer. Mg(2+) serves as cofactor.

The protein resides in the cytoplasm. It carries out the reaction shikimate + ATP = 3-phosphoshikimate + ADP + H(+). It participates in metabolic intermediate biosynthesis; chorismate biosynthesis; chorismate from D-erythrose 4-phosphate and phosphoenolpyruvate: step 5/7. Functionally, catalyzes the specific phosphorylation of the 3-hydroxyl group of shikimic acid using ATP as a cosubstrate. The sequence is that of Shikimate kinase from Prochlorococcus marinus (strain MIT 9211).